The following is a 486-amino-acid chain: Elastin-binding protein EbpS (486 aa).

A compositionally biased stretch (basic and acidic residues) spans 1–40 (MSNNFKDDFEKNRQSIDTNSHQDHTEDVEKDQSELEHQDT). Positions 1–314 (MSNNFKDDFE…NHDRDKERKK (314 aa)) are disordered. Residues 2 to 204 (SNNFKDDFEK…ESKDHHSGKK (203 aa)) lie on the Extracellular side of the membrane. Positions 14 to 34 (QSIDTNSHQDHTEDVEKDQSE) are elastin-binding. Residues 64 to 85 (TNHNKQVHNESQTSEDNVQNEA) are compositionally biased toward polar residues. Basic and acidic residues-rich tracts occupy residues 103-118 (EPSHQDSTPQHEEEYY), 126-160 (DKSHPEPIEDNDKHETIKEAENNTEHSTVSDKSEA), and 180-199 (SKDKHDDVTVKQDKDESKDH). 2 stretches are compositionally biased toward low complexity: residues 204-225 (KGAAIGAGTAGVAGAAGAMGVS) and 233-246 (DAQNKSNSDKSNNS). A helical transmembrane segment spans residues 205–225 (GAAIGAGTAGVAGAAGAMGVS). The Cytoplasmic portion of the chain corresponds to 226–319 (KAKKHSNDAQ…KERKKGGMAK (94 aa)). Positions 247 to 259 (TEDKVSQDKSKDH) are enriched in basic and acidic residues. Residues 278–297 (GAASKSASAASKPHASNNAS) are compositionally biased toward low complexity. Residues 299–314 (NHDEHDNHDRDKERKK) show a composition bias toward basic and acidic residues. A helical membrane pass occupies residues 320-340 (VLLPLIAAVLIIGALAIFGGM). The Extracellular portion of the chain corresponds to 341 to 486 (ALNNHNNGTK…IRNGQQIVIP (146 aa)). The tract at residues 351–440 (ENKIANTNKN…QRQGGGQRHT (90 aa)) is disordered. Residues 361–398 (NADESKDKDTSKDASKDKSKSTDSDKSKEDQDKATKDE) are compositionally biased toward basic and acidic residues. The segment covering 403–431 (QNNANQANNQAQNNQNQQQANQNQQQQQQ) has biased composition (low complexity). The LysM domain occupies 437 to 485 (QRHTVNGQENLYRIAIQYYGSGSPENVEKIRRANGLSGNNIRNGQQIVI).

The protein localises to the cell membrane. Functionally, promotes binding of soluble elastin peptides and tropoelastin to S.aureus cells although it is not able to promote bacterial adherence to immobilized elastin and, therefore, is not a microbial surface component recognizing adhesive matrix molecule (MSCRAMM). This chain is Elastin-binding protein EbpS (ebpS), found in Staphylococcus aureus (strain MSSA476).